We begin with the raw amino-acid sequence, 319 residues long: Cytochrome c biogenesis protein CcsA (319 aa).

The next 7 membrane-spanning stretches (helical) occupy residues 9–29 (ILTH…LITL), 44–64 (GVIG…AYSG), 71–91 (LYES…FPYL), 143–163 (MVLG…LLVI), 225–245 (IISL…VWAN), 259–273 (TWAF…IYLH), and 286–306 (AIVA…VNLL).

Belongs to the CcmF/CycK/Ccl1/NrfE/CcsA family. In terms of assembly, may interact with Ccs1.

Its subcellular location is the plastid. The protein localises to the chloroplast thylakoid membrane. Functionally, required during biogenesis of c-type cytochromes (cytochrome c6 and cytochrome f) at the step of heme attachment. The polypeptide is Cytochrome c biogenesis protein CcsA (Oenothera argillicola (Appalachian evening primrose)).